The following is a 1735-amino-acid chain: MSACNTFTEHVWKPGECKNCFKPKSLHQLPPDSEKTPITHGSGKTNANHSNNHRVRSTGNFRPPVAKKPTIAVKPTMMVADGQSVCGELSIQEHCENKPVILGWNQNKTSLSQKPLNNNSEGDAEGFGSDPQQCANNDSAQKISNNNNGLTEVLKEIAGLEATPPVRGNETNARETFLGRINDCYKRSLERKIPPSCMTGSMKDSQGKHVILSGSAEVISNEGGRFCYPEFSSGEESEEDVLFSNMEEEHESWDESDEELLAMEIRMRGQPRFANFRANTLSPVRFFVSKKWNTIPLRNKSLQRICAVDYDDSYDEILNGYEENSGVSYGQGSVQSTISSDCTSPGSSFTEESRSETASSLSQKVCNGGISPGNPGNSKDIAETESNFESPPGNNEEKDESLTSKSSVKVPETHKAVLALRLQEKDGKIAVHTEKPESKASTDIAGQAVTISLVPVEEQTKPYRVVNLEQPLCKPYTVVDVSAAMASEHLGRPKIKGSSSTPNSPVTSPALTPGQINAHLKKSSAIRYQEVWTSSTSPRQKIPKIELSTGGPGPNVPPRKNCHKSAPTSPTATNISSKTIPVKSPNLSEIKFNSYNNAGMPPFPIIIHDEPSYARSSKNAIKVPIVINPNAYDNLAIYKSFLGTSGELSVKEKTTSVISHTYEEIETESKVSDSTPSKLTDCPQAKGFSNSTERKRGSVAQKVQEFNNCLNRGQSSPQRSYSSTHSSPAKIQRPTQEPAGKTEGAQGSQVPGSSSNSTREKASAVLCQIVASIQPPQTPPEAPQSSPKACSVEELYAVPPDADTTKSIPKNPPVRPKSLFTSQSSGEGEAHQTTESPTAKIQKDPSTKPVTSPPSKLVTSAQSEPPPPFPPPRSTSSPYHASNLLQRHFTNWTKPTSPTRSTEAESILHSEGSRRAADAKPKRWISFKSFFRRRKTDEEEEKEKEREKGKLVGLDGTVIHMLPPPPVQRHHWFTEAKGEASEKPAIVFMYRCDPDQGHLSVDQSKAGAEKGRAEEVLLRNSEEKKSSYLPSQIPDKACSRVTHEVAGELSPRDPRTPAGKQDGTSVTPTLPPPDLEREEEKDDTLDPTDVSPCSATYSNLGQSRAAMIPPKHPRHPKGAVDDAIAFGEKTDQEGLNASQPTPPPLPKKMIRANTEPISKDLQKAMESSLCVMANPTYDIDPNWDASSAGSSISYELKGLDVESYESLERPLHKERPVPSAANSISSLATLSVKDRFSNSMESLSSRRGLSYRQTRSIQKPQRQALYRGLDNREEVVGKLRSLHTDALKRLAVKCEDLFMAGQKDQLRFGVDSWSDFRLTSDKPCCEAGDAVYYTASYAKDPLSNYAVKICKSKAKESQQYYHSLAVRQSLPVHFNIQQDCGHFLAEVPSRLLPWEDPDAPEKAEDGTEDSEEEGKAETLGGNPEPCSETEPSQKENQRVTNRKQRSHVVVITREVPHLTVADFVRDSLAHHGNSPDLYERQVCLLLLQLCSGLEHLKPYHVTHCDLRLENLLLVQHQPGGAAQGPSPADPCPTLACPTRLIVSNFSQAKQKSHLVDPQILRDQSRLAPEIITATQYKKCDEFQTGILIYEMLHLPNPFDENPELKEKEYTRTDLPRIPLRSPYSWGLQQLASCLLNPNPSERILISDAKGILQCLLWGPREDLFQIFTTSATLAQKNALLQNWLDIKRTLLMIKFAEKSLDREGGISLEDWLCAQYLAFATTDSLSYIVKILQYR.

2 disordered regions span residues 26 to 66 (LHQL…PPVA) and 111 to 145 (LSQK…KISN). Polar residues-rich tracts occupy residues 111 to 121 (LSQKPLNNNSE) and 130 to 145 (DPQQ…KISN). Phosphoserine is present on S282. Disordered regions lie at residues 324–410 (NSGV…SVKV), 491–514 (GRPK…LTPG), and 537–580 (SPRQ…SKTI). A compositionally biased stretch (low complexity) spans 325 to 336 (SGVSYGQGSVQS). The span at 337–365 (TISSDCTSPGSSFTEESRSETASSLSQKV) shows a compositional bias: polar residues. The span at 367–378 (NGGISPGNPGNS) shows a compositional bias: low complexity. Residues 384–393 (TESNFESPPG) are compositionally biased toward polar residues. The segment covering 498–509 (SSSTPNSPVTSP) has biased composition (low complexity). A phosphoserine mark is found at S537, S569, and S584. Residues 566–580 (APTSPTATNISSKTI) are compositionally biased toward polar residues. 2 positions are modified to phosphotyrosine: Y632 and Y638. A Phosphoserine modification is found at S645. Y662 carries the phosphotyrosine modification. Disordered stretches follow at residues 663-762 (EEIE…REKA), 800-919 (PDAD…AADA), and 1019-1097 (RNSE…SATY). 3 stretches are compositionally biased toward polar residues: residues 704-735 (QEFN…QRPT), 745-757 (AQGS…SSNS), and 819-839 (LFTS…SPTA). A phosphoserine mark is found at S824 and S825. A compositionally biased stretch (low complexity) spans 847-863 (TKPVTSPPSKLVTSAQS). Residues 864–873 (EPPPPFPPPR) show a composition bias toward pro residues. Over residues 879-901 (YHASNLLQRHFTNWTKPTSPTRS) the composition is skewed to polar residues. Residue S897 is modified to Phosphoserine. Basic and acidic residues-rich tracts occupy residues 902-919 (TEAE…AADA) and 1037-1055 (ACSR…RDPR). Over residues 1076-1086 (EREEEKDDTLD) the composition is skewed to acidic residues. T1141 carries the post-translational modification Phosphothreonine. Residue Y1177 is modified to Phosphotyrosine. The required for homodimerization stretch occupies residues 1274–1300 (EVVGKLRSLHTDALKRLAVKCEDLFMA). Residues 1302–1664 (QKDQLRFGVD…LLWGPREDLF (363 aa)) form the Protein kinase domain. Phosphoserine is present on S1363. The interval 1394–1445 (WEDPDAPEKAEDGTEDSEEEGKAETLGGNPEPCSETEPSQKENQRVTNRKQR) is disordered. The required for homodimerization stretch occupies residues 1659 to 1732 (PREDLFQIFT…DSLSYIVKIL (74 aa)).

The protein belongs to the protein kinase superfamily. In terms of assembly, homodimer. Interacts with BCAR1 and CRK. Interacts with PRAG1. Interacts (when phosphorylated at Tyr-1177) with SHC1 (via PID domain). Found in a complex with PPP1CA, PPP1CC and SHC1. Interacts (when phosphorylated at Tyr-632) with tensin TNS3 (when phosphorylated on the SH2 domain); TNS3 also interacts with integrins ITGB1, ITGB3 and ITGB5 and mediates their association with PEAK1. Post-translationally, phosphorylated on tyrosine in a CSK-dependent manner in response to adhesion to fibronectin and to EGF stimulation. Phosphorylation at Tyr-662 by a Src family kinase controls subcellular localization to focal adhesion and focal adhesion dynamics. Phosphorylation at Tyr-1177 is essential for binding to SHC1. Phosphorylation at Tyr-632 promotes interaction with tensin TNS3.

It localises to the cytoplasm. The protein localises to the cytoskeleton. The protein resides in the cell junction. It is found in the focal adhesion. Functionally, probable catalytically inactive kinase. Scaffolding protein that regulates the cytoskeleton to control cell spreading and migration by modulating focal adhesion dynamics. Acts as a scaffold for mediating EGFR signaling. The chain is Inactive tyrosine-protein kinase PEAK1 (Peak1) from Mus musculus (Mouse).